A 599-amino-acid polypeptide reads, in one-letter code: Prostaglandin G/H synthase 1 (599 aa).

Positions 1–23 (MSRSLLLWFLLFLLLLPPLPVLL) are cleaved as a signal peptide. An EGF-like domain is found at 31 to 69 (PVNPCCYYPCQHQGICVRFGLDRYQCDCTRTGYSGPNCT). 4 cysteine pairs are disulfide-bonded: C35-C46, C36-C158, C40-C56, and C58-C68. N-linked (GlcNAc...) asparagine glycosylation is found at N67, N103, and N143. Residue H206 is the Proton acceptor of the active site. Y384 (for cyclooxygenase activity) is an active-site residue. A heme b-binding site is contributed by H387. A disulfide bridge connects residues C568 and C574.

The protein belongs to the prostaglandin G/H synthase family. As to quaternary structure, homodimer. The cofactor is heme b.

The protein resides in the microsome membrane. It is found in the endoplasmic reticulum membrane. It carries out the reaction (5Z,8Z,11Z,14Z)-eicosatetraenoate + AH2 + 2 O2 = prostaglandin H2 + A + H2O. The enzyme catalyses (5Z,8Z,11Z,14Z)-eicosatetraenoate + 2 O2 = prostaglandin G2. The catalysed reaction is prostaglandin G2 + AH2 = prostaglandin H2 + A + H2O. It catalyses the reaction (9Z,12Z)-octadecadienoate + AH2 + O2 = (9R)-hydroxy-(10E,12Z)-octadecadienoate + A + H2O. It carries out the reaction (9Z,12Z)-octadecadienoate + AH2 + O2 = (9S)-hydroxy-(10E,12Z)-octadecadienoate + A + H2O. The enzyme catalyses (9Z,12Z)-octadecadienoate + AH2 + O2 = (13S)-hydroxy-(9Z,11E)-octadecadienoate + A + H2O. The catalysed reaction is (9Z,12Z)-octadecadienoate + AH2 + O2 = (13R)-hydroxy-(9Z,11E)-octadecadienoate + A + H2O. The protein operates within lipid metabolism; prostaglandin biosynthesis. The cyclooxygenase activity is inhibited by nonsteroidal anti-inflammatory drugs (NSAIDs) including ibuprofen, flurbiprofen, ketoprofen, naproxen, flurbiprofen, anirolac, fenclofenac and diclofenac. Dual cyclooxygenase and peroxidase that plays an important role in the biosynthesis pathway of prostanoids, a class of C20 oxylipins mainly derived from arachidonate ((5Z,8Z,11Z,14Z)-eicosatetraenoate, AA, C20:4(n-6)), with a particular role in the inflammatory response. The cyclooxygenase activity oxygenates AA to the hydroperoxy endoperoxide prostaglandin G2 (PGG2), and the peroxidase activity reduces PGG2 to the hydroxy endoperoxide prostaglandin H2 (PGH2), the precursor of all 2-series prostaglandins and thromboxanes. This complex transformation is initiated by abstraction of hydrogen at carbon 13 (with S-stereochemistry), followed by insertion of molecular O2 to form the endoperoxide bridge between carbon 9 and 11 that defines prostaglandins. The insertion of a second molecule of O2 (bis-oxygenase activity) yields a hydroperoxy group in PGG2 that is then reduced to PGH2 by two electrons. Involved in the constitutive production of prostanoids in particular in the stomach and platelets. In gastric epithelial cells, it is a key step in the generation of prostaglandins, such as prostaglandin E2 (PGE2), which plays an important role in cytoprotection. In platelets, it is involved in the generation of thromboxane A2 (TXA2), which promotes platelet activation and aggregation, vasoconstriction and proliferation of vascular smooth muscle cells. Can also use linoleate (LA, (9Z,12Z)-octadecadienoate, C18:2(n-6)) as substrate and produce hydroxyoctadecadienoates (HODEs) in a regio- and stereospecific manner, being (9R)-HODE ((9R)-hydroxy-(10E,12Z)-octadecadienoate) and (13S)-HODE ((13S)-hydroxy-(9Z,11E)-octadecadienoate) its major products. This Homo sapiens (Human) protein is Prostaglandin G/H synthase 1.